The sequence spans 238 residues: MORN repeat-containing protein 3 (238 aa).

MORN repeat units lie at residues 38-60, 62-84, 91-113, 114-136, 137-159, 160-182, and 184-205; these read YTGE…RRKS, YEGD…DSNT, YSGY…AKEY, YEGE…NGDI, YEGE…NENR, YEGS…NKGQ, and YEGV…GRTE.

It is found in the cytoplasmic vesicle. The protein resides in the secretory vesicle. It localises to the acrosome. Its function is as follows. Assembles a suppression complex (suppresome) by tethering SIRT1 and MDM2 to regulate composite modifications of p53/TP53. Confers both deacetylation-mediated functional inactivation, by SIRT1, and ubiquitination-dependent degradation, by MDM2, of p53/TP53, promoting a proliferative and cell survival behaviors. May play a role in the regulation of spermatogenesis. This chain is MORN repeat-containing protein 3 (morn3), found in Xenopus laevis (African clawed frog).